We begin with the raw amino-acid sequence, 344 residues long: MIEQDRIIDANAKSREEQIDRAVRPKSLKEYIGQPVVREQMEIFIGAAQARGDSLDHTLVFGPPGLGKTTLANIIAAEMGADLKSTSGPVLEKAGDLAALMTNLEPGDVLFIDEIHRLSPVVEEILYPAMEDFQLDIMIGEGPAARSIKLELPPFTLVGATTRAGLLTSPLRDRFGIVQRLEFYNIEDLTHIVERSASLMGVAMDTPGAREVAKRSRGTPRIANRLLRRVRDYAEVKSDGTVTAQIADLALNMLNVDEHGFDHMDRRLLLTLIEKFGGGPVGVDSLAAAISEERDTIEDVLEPYLIQQGFIMRTPRGRMATQLAYQHFGLNVPAALKQDSLPGI.

Residues 4–184 (QDRIIDANAK…FGIVQRLEFY (181 aa)) are large ATPase domain (RuvB-L). Residues Arg-24, Gly-65, Lys-68, Thr-69, Thr-70, 131-133 (EDF), Arg-174, Tyr-184, and Arg-221 each bind ATP. Thr-69 is a Mg(2+) binding site. Residues 185-255 (NIEDLTHIVE…IADLALNMLN (71 aa)) are small ATPAse domain (RuvB-S). A head domain (RuvB-H) region spans residues 258–344 (EHGFDHMDRR…ALKQDSLPGI (87 aa)). Residues Arg-294, Arg-313, and Arg-318 each contribute to the DNA site.

Belongs to the RuvB family. Homohexamer. Forms an RuvA(8)-RuvB(12)-Holliday junction (HJ) complex. HJ DNA is sandwiched between 2 RuvA tetramers; dsDNA enters through RuvA and exits via RuvB. An RuvB hexamer assembles on each DNA strand where it exits the tetramer. Each RuvB hexamer is contacted by two RuvA subunits (via domain III) on 2 adjacent RuvB subunits; this complex drives branch migration. In the full resolvosome a probable DNA-RuvA(4)-RuvB(12)-RuvC(2) complex forms which resolves the HJ.

It is found in the cytoplasm. The enzyme catalyses ATP + H2O = ADP + phosphate + H(+). Functionally, the RuvA-RuvB-RuvC complex processes Holliday junction (HJ) DNA during genetic recombination and DNA repair, while the RuvA-RuvB complex plays an important role in the rescue of blocked DNA replication forks via replication fork reversal (RFR). RuvA specifically binds to HJ cruciform DNA, conferring on it an open structure. The RuvB hexamer acts as an ATP-dependent pump, pulling dsDNA into and through the RuvAB complex. RuvB forms 2 homohexamers on either side of HJ DNA bound by 1 or 2 RuvA tetramers; 4 subunits per hexamer contact DNA at a time. Coordinated motions by a converter formed by DNA-disengaged RuvB subunits stimulates ATP hydrolysis and nucleotide exchange. Immobilization of the converter enables RuvB to convert the ATP-contained energy into a lever motion, pulling 2 nucleotides of DNA out of the RuvA tetramer per ATP hydrolyzed, thus driving DNA branch migration. The RuvB motors rotate together with the DNA substrate, which together with the progressing nucleotide cycle form the mechanistic basis for DNA recombination by continuous HJ branch migration. Branch migration allows RuvC to scan DNA until it finds its consensus sequence, where it cleaves and resolves cruciform DNA. The chain is Holliday junction branch migration complex subunit RuvB from Saccharophagus degradans (strain 2-40 / ATCC 43961 / DSM 17024).